Here is a 43-residue protein sequence, read N- to C-terminus: Protein PsbN (43 aa).

Residues 7–24 (VAISISRSLVSFTGYALY) traverse the membrane as a helical segment.

This sequence belongs to the PsbN family.

The protein localises to the plastid. It is found in the chloroplast thylakoid membrane. Functionally, may play a role in photosystem I and II biogenesis. This is Protein PsbN from Ginkgo biloba (Ginkgo).